The chain runs to 892 residues: Leucine--tRNA ligase (892 aa).

The 'HIGH' region motif lies at 42–52 (PYPSGKLHMGH). The short motif at 640-644 (TMSKS) is the 'KMSKS' region element. Lysine 643 serves as a coordination point for ATP.

Belongs to the class-I aminoacyl-tRNA synthetase family.

It is found in the cytoplasm. It carries out the reaction tRNA(Leu) + L-leucine + ATP = L-leucyl-tRNA(Leu) + AMP + diphosphate. This chain is Leucine--tRNA ligase, found in Albidiferax ferrireducens (strain ATCC BAA-621 / DSM 15236 / T118) (Rhodoferax ferrireducens).